Reading from the N-terminus, the 146-residue chain is MNILLINGPNLNLLGTREPEIYGSKTLNDIENDLSSIANDKIINLECFQSNHEGEIVDKIQDSIKNVQGILINAGAFTHTSISIRDALIGSKIPFVELHISNIFSREEFRKESFLTDKAIGIISGFGISSYSLGLYGIIEYLKNKK.

Catalysis depends on tyrosine 22, which acts as the Proton acceptor. Substrate is bound by residues asparagine 73, histidine 79, and aspartate 86. Catalysis depends on histidine 99, which acts as the Proton donor. Substrate-binding positions include 100 to 101 and arginine 110; that span reads IS.

This sequence belongs to the type-II 3-dehydroquinase family. As to quaternary structure, homododecamer.

The enzyme catalyses 3-dehydroquinate = 3-dehydroshikimate + H2O. It participates in metabolic intermediate biosynthesis; chorismate biosynthesis; chorismate from D-erythrose 4-phosphate and phosphoenolpyruvate: step 3/7. Functionally, catalyzes a trans-dehydration via an enolate intermediate. This Prochlorococcus marinus (strain MIT 9515) protein is 3-dehydroquinate dehydratase.